We begin with the raw amino-acid sequence, 393 residues long: Myb-related transcription factor, partner of profilin (393 aa).

The segment covering 1-11 has biased composition (low complexity); it reads MASATAAAAPG. A disordered region spans residues 1–21; sequence MASATAAAAPGEAEETTRLRK. In terms of domain architecture, Myb-like spans 16 to 88; that stretch reads TTRLRKPRFS…EVQKRWNDFK (73 aa). The short motif at 87 to 90 is the Nuclear localization signal element; the sequence is FKRR. Disordered stretches follow at residues 125 to 254, 290 to 323, and 348 to 393; these read GPGV…EQSL, PLLPGTPADPLPPPPPPPPPPPPKPVLPPSAPKV, and IISP…WKSP. A compositionally biased stretch (low complexity) spans 142–157; that stretch reads AAASSQPQASTASTQR. Residues 160-171 are compositionally biased toward basic and acidic residues; that stretch reads LSEDRRQDRRAD. Polar residues predominate over residues 173 to 184; it reads PAQSKGGSSSPE. 4 stretches are compositionally biased toward pro residues: residues 219–229, 238–247, 296–320, and 359–368; these read PPLPAPPPPPT, SPSPTPPRPT, PADPLPPPPPPPPPPPPKPVLPPSA, and KPLPPAPPLP. Over residues 375–393 the composition is skewed to basic residues; it reads HKRRKGFPTRKRRGRWKSP. 2 consecutive short sequence motifs (nuclear localization signal) follow at residues 376 to 379 and 384 to 387; these read KRRK and RKRR.

As to quaternary structure, interacts with PFN1. Homodimer and heterodimer with PFN1. As to expression, ubiquitous. Highly expressed in brain, liver and testis. Moderate expression in heart, lung and skeletal muscle. Low expression in spleen and kidney.

The protein resides in the nucleus. Functionally, transcriptional repressor; DNA-binding protein that specifically recognizes the core sequence 5'-YAAC[GT]G-3'. Dimerization with PFN1 reduces its DNA-binding capacity. This Mus musculus (Mouse) protein is Myb-related transcription factor, partner of profilin (Mypop).